The following is a 153-amino-acid chain: MVNVEDRLYEGIAQQAGIAGCTLVDARMVRTGRAVALQVFIEKDETTAVTIEDCAAVSRQLSLWLDVENPIHGAYRLEVSSPGLDRPLKNLHDFERFKGSQAEIHLHGLTQGRRRLQGELLGVEDQKIVLKNAEGRWTFALDDIHKARLVPQW.

It belongs to the RimP family.

Its subcellular location is the cytoplasm. Functionally, required for maturation of 30S ribosomal subunits. This chain is Ribosome maturation factor RimP, found in Acidithiobacillus ferrooxidans (strain ATCC 53993 / BNL-5-31) (Leptospirillum ferrooxidans (ATCC 53993)).